The primary structure comprises 432 residues: Cysteine desulfurase, mitosomal (432 aa).

Residues 102–103, Gln-212, and 232–234 each bind pyridoxal 5'-phosphate; these read AT and CAH. Lys-235 carries the post-translational modification N6-(pyridoxal phosphate)lysine. Residue Thr-272 coordinates pyridoxal 5'-phosphate. The Cysteine persulfide intermediate role is filled by Cys-357. Cys-357 contacts [2Fe-2S] cluster.

It belongs to the class-V pyridoxal-phosphate-dependent aminotransferase family. NifS/IscS subfamily. Requires pyridoxal 5'-phosphate as cofactor.

It localises to the mitosome. It catalyses the reaction (sulfur carrier)-H + L-cysteine = (sulfur carrier)-SH + L-alanine. Its function is as follows. Catalyzes the removal of elemental sulfur from cysteine to produce alanine. It supplies the inorganic sulfur for iron-sulfur (Fe-S) clusters in mitosomes. This chain is Cysteine desulfurase, mitosomal, found in Encephalitozoon cuniculi (strain GB-M1) (Microsporidian parasite).